A 102-amino-acid chain; its full sequence is Noncompact myelin-associated protein (102 aa).

The Extracellular segment spans residues 1 to 30; it reads MTTATPLGDTTFFSLNMTTRGEDFLYKSSG. A helical transmembrane segment spans residues 31-51; sequence AIVAAVVVVVIIIFTVVLILL. Topologically, residues 52–102 are cytoplasmic; sequence KMYNRKMRTRRELEPKGPKPTAPSAVGPNSNGSQHPATVTFSPVDVQVETR. Residues 60–102 form a disordered region; sequence TRRELEPKGPKPTAPSAVGPNSNGSQHPATVTFSPVDVQVETR. Residues 78-92 are compositionally biased toward polar residues; the sequence is GPNSNGSQHPATVTF.

In terms of processing, glycosylated.

Its subcellular location is the cell membrane. Its function is as follows. Plays a role in myelin formation. The protein is Noncompact myelin-associated protein (NCMAP) of Homo sapiens (Human).